Here is a 376-residue protein sequence, read N- to C-terminus: Putative glutamate--cysteine ligase 2 (376 aa).

It belongs to the glutamate--cysteine ligase type 2 family. YbdK subfamily.

The catalysed reaction is L-cysteine + L-glutamate + ATP = gamma-L-glutamyl-L-cysteine + ADP + phosphate + H(+). ATP-dependent carboxylate-amine ligase which exhibits weak glutamate--cysteine ligase activity. The polypeptide is Putative glutamate--cysteine ligase 2 (Mycobacterium bovis (strain ATCC BAA-935 / AF2122/97)).